Here is a 185-residue protein sequence, read N- to C-terminus: Guanylate kinase (185 aa).

In terms of domain architecture, Guanylate kinase-like spans 4-181; the sequence is GALYVVSGPS…ACNDLISIIE (178 aa). 11–18 lines the ATP pocket; it reads GPSGAGKS.

Belongs to the guanylate kinase family.

It is found in the cytoplasm. It carries out the reaction GMP + ATP = GDP + ADP. Functionally, essential for recycling GMP and indirectly, cGMP. The chain is Guanylate kinase from Fusobacterium nucleatum subsp. nucleatum (strain ATCC 25586 / DSM 15643 / BCRC 10681 / CIP 101130 / JCM 8532 / KCTC 2640 / LMG 13131 / VPI 4355).